We begin with the raw amino-acid sequence, 270 residues long: tRNA pseudouridine synthase A (270 aa).

Aspartate 51 functions as the Nucleophile in the catalytic mechanism. A substrate-binding site is contributed by tyrosine 109.

This sequence belongs to the tRNA pseudouridine synthase TruA family. Homodimer.

The catalysed reaction is uridine(38/39/40) in tRNA = pseudouridine(38/39/40) in tRNA. Functionally, formation of pseudouridine at positions 38, 39 and 40 in the anticodon stem and loop of transfer RNAs. The chain is tRNA pseudouridine synthase A from Burkholderia thailandensis (strain ATCC 700388 / DSM 13276 / CCUG 48851 / CIP 106301 / E264).